Consider the following 507-residue polypeptide: MEELQRHFEIDGSRQQRFIYPFLFQEYIYALAHYYALNGSIFYETVENLGYDKKSSSLIVKRLITRMHRQNRLIISINDSNQNRFIGHNKNLYTQTVSEGFAVIMEIPFSLRLVFSLEEKEISKSHNLRSIHSLFPFFEDKLSHLNHVSHILIPHPAHLEILVQILHCWIQDAPSLHLLRFFLHDYHNSKSINAQKKSIFVCSKENRRFFSFIYNFHVYESELMFVFLRKQSSHLRSTSFGTVLERTHFYGKIEHLVVVLRNDFQKTLWLFKDPFMHYVRYQGKSILASKGTHLRMKKWKSYLVLFWQSHFYLWSQPERIRINQLYNHSFYFLGYLSGVRRNPSVVRSQMLENSFLIETSIKKFETLVPITPLIGSLAKAKFCNVSGHPISKPSWADLSDSDIINRFGRIYRNFSHYHSGSSKKQTLYQIKYILRLSCARTLARKHKSTVRAFLKRLGSKFLEEFLTEEEQVLSLIFPRTPSPSYRSHRERIWYLDIIYINILTNHV.

This sequence belongs to the intron maturase 2 family. MatK subfamily.

Its subcellular location is the plastid. It is found in the chloroplast. Functionally, usually encoded in the trnK tRNA gene intron. Probably assists in splicing its own and other chloroplast group II introns. The polypeptide is Maturase K (Cananga odorata (Ylang-ylang tree)).